Consider the following 98-residue polypeptide: Large ribosomal subunit protein uL23 (98 aa).

This sequence belongs to the universal ribosomal protein uL23 family. Part of the 50S ribosomal subunit. Contacts protein L29, and trigger factor when it is bound to the ribosome.

One of the early assembly proteins it binds 23S rRNA. One of the proteins that surrounds the polypeptide exit tunnel on the outside of the ribosome. Forms the main docking site for trigger factor binding to the ribosome. The chain is Large ribosomal subunit protein uL23 from Halorhodospira halophila (strain DSM 244 / SL1) (Ectothiorhodospira halophila (strain DSM 244 / SL1)).